A 392-amino-acid chain; its full sequence is Histidinol-phosphate aminotransferase 2 (392 aa).

Lys-228 bears the N6-(pyridoxal phosphate)lysine mark.

Belongs to the class-II pyridoxal-phosphate-dependent aminotransferase family. Histidinol-phosphate aminotransferase subfamily. In terms of assembly, homodimer. Pyridoxal 5'-phosphate serves as cofactor.

The catalysed reaction is L-histidinol phosphate + 2-oxoglutarate = 3-(imidazol-4-yl)-2-oxopropyl phosphate + L-glutamate. It functions in the pathway amino-acid biosynthesis; L-histidine biosynthesis; L-histidine from 5-phospho-alpha-D-ribose 1-diphosphate: step 7/9. In Nitrosospira multiformis (strain ATCC 25196 / NCIMB 11849 / C 71), this protein is Histidinol-phosphate aminotransferase 2.